The following is a 96-amino-acid chain: Putative regulatory protein Teth514_1762 (96 aa).

The protein belongs to the RemA family.

The sequence is that of Putative regulatory protein Teth514_1762 from Thermoanaerobacter sp. (strain X514).